The primary structure comprises 404 residues: Probable sugar efflux transporter (404 aa).

12 consecutive transmembrane segments (helical) span residues 15–35 (VITF…PVAL), 51–71 (GLII…FMLL), 85–105 (LVLF…WVLV), 109–129 (IGVA…VIRV), 137–157 (QAIG…LPLG), 168–188 (ATFA…YQLL), 209–229 (PLLL…FTAY), 245–265 (SMAT…SLLF), 276–296 (FILF…IASQ), 299–319 (WTMF…GLGL), 333–353 (VAMA…ALLG), and 363–383 (AYIG…FILV).

Belongs to the major facilitator superfamily. SotB (TC 2.A.1.2) family.

The protein localises to the cell inner membrane. In terms of biological role, involved in the efflux of sugars. The physiological role may be the reduction of the intracellular concentration of toxic sugars or sugar metabolites. The chain is Probable sugar efflux transporter from Pasteurella multocida (strain Pm70).